Consider the following 295-residue polypeptide: Glutamyl-Q tRNA(Asp) synthetase (295 aa).

L-glutamate-binding positions include 9 to 13 and E45; that span reads RFAPT. Positions 12–22 match the 'HIGH' region motif; the sequence is PTPSGYLHFGS. The Zn(2+) site is built by C101, C103, Y115, and C119. The L-glutamate site is built by Y172 and R190. The 'KMSKS' region signature appears at 228 to 232; sequence KLGKS. An ATP-binding site is contributed by K231.

It belongs to the class-I aminoacyl-tRNA synthetase family. GluQ subfamily. Zn(2+) serves as cofactor.

In terms of biological role, catalyzes the tRNA-independent activation of glutamate in presence of ATP and the subsequent transfer of glutamate onto a tRNA(Asp). Glutamate is transferred on the 2-amino-5-(4,5-dihydroxy-2-cyclopenten-1-yl) moiety of the queuosine in the wobble position of the QUC anticodon. This chain is Glutamyl-Q tRNA(Asp) synthetase, found in Pseudomonas syringae pv. syringae (strain B728a).